We begin with the raw amino-acid sequence, 59 residues long: ATP synthase subunit J, mitochondrial (59 aa).

A helical membrane pass occupies residues I9–Y25.

The protein belongs to the ATPase j subunit family. In terms of assembly, F-type ATPases have 2 components, CF(1) - the catalytic core - and CF(0) - the membrane proton channel. In yeast, the dimeric form of ATP synthase consists of 17 polypeptides: alpha, beta, gamma, delta, epsilon, 4 (B), 5 (OSCP), 6 (A), 8, 9 (C), d, E (Tim11), f, g, h, i/j and k.

The protein resides in the mitochondrion membrane. Mitochondrial membrane ATP synthase (F(1)F(0) ATP synthase or Complex V) produces ATP from ADP in the presence of a proton gradient across the membrane which is generated by electron transport complexes of the respiratory chain. F-type ATPases consist of two structural domains, F(1) - containing the extramembraneous catalytic core and F(0) - containing the membrane proton channel, linked together by a central stalk and a peripheral stalk. During catalysis, ATP synthesis in the catalytic domain of F(1) is coupled via a rotary mechanism of the central stalk subunits to proton translocation. Part of the complex F(0) domain. Minor subunit located with subunit a in the membrane. In Saccharomyces cerevisiae (strain ATCC 204508 / S288c) (Baker's yeast), this protein is ATP synthase subunit J, mitochondrial (ATP18).